The chain runs to 220 residues: Adenylate kinase (220 aa).

Gly-10–Thr-15 contacts ATP. Residues Ser-30–Val-59 are NMP. AMP is bound by residues Thr-31, Arg-36, Lys-57–Val-59, Gly-85–Arg-88, and Gln-92. Residues Gly-122–Asp-159 are LID. Residues Arg-123 and Thr-132–Tyr-133 each bind ATP. Arg-156 and Arg-167 together coordinate AMP. Position 206 (Gly-206) interacts with ATP.

This sequence belongs to the adenylate kinase family. Monomer.

It localises to the cytoplasm. The enzyme catalyses AMP + ATP = 2 ADP. Its pathway is purine metabolism; AMP biosynthesis via salvage pathway; AMP from ADP: step 1/1. Its function is as follows. Catalyzes the reversible transfer of the terminal phosphate group between ATP and AMP. Plays an important role in cellular energy homeostasis and in adenine nucleotide metabolism. This Burkholderia mallei (strain NCTC 10247) protein is Adenylate kinase.